The chain runs to 430 residues: Adenylosuccinate synthetase (430 aa).

GTP contacts are provided by residues 12 to 18 (GDEGKGK) and 40 to 42 (GHT). The Proton acceptor role is filled by D13. 2 residues coordinate Mg(2+): D13 and G40. IMP contacts are provided by residues 13-16 (DEGK), 38-41 (NAGH), T130, R144, Q225, T240, and R304. Catalysis depends on H41, which acts as the Proton donor. 300-306 (STTGRPR) is a substrate binding site. GTP is bound by residues R306, 332–334 (KLD), and 414–416 (SVG).

It belongs to the adenylosuccinate synthetase family. In terms of assembly, homodimer. The cofactor is Mg(2+).

The protein localises to the cytoplasm. It catalyses the reaction IMP + L-aspartate + GTP = N(6)-(1,2-dicarboxyethyl)-AMP + GDP + phosphate + 2 H(+). The protein operates within purine metabolism; AMP biosynthesis via de novo pathway; AMP from IMP: step 1/2. In terms of biological role, plays an important role in the de novo pathway of purine nucleotide biosynthesis. Catalyzes the first committed step in the biosynthesis of AMP from IMP. The polypeptide is Adenylosuccinate synthetase (Pelobacter propionicus (strain DSM 2379 / NBRC 103807 / OttBd1)).